Reading from the N-terminus, the 746-residue chain is Taurocyamine kinase (746 aa).

Approximate repeat units lie at residues 31–393 (MQVE…PEGV) and 394–705 (MPVE…YGEH). One can recognise a Phosphagen kinase N-terminal 1 domain in the interval 35-116 (SLQNLQAKIR…FDAVIADYHK (82 aa)). In terms of domain architecture, Phosphagen kinase C-terminal 1 spans 146–382 (LVVSTRVRLG…RALLELEVML (237 aa)). Residues 149–153 (STRVR), His-212, and Arg-256 each bind ATP. Cys-298 is a catalytic residue. Residues 307-311 (RASVH) and 335-340 (RGTHGE) contribute to the ATP site. In terms of domain architecture, Phosphagen kinase N-terminal 2 spans 398-479 (PLTYLAKLLE…LDPLICDYHG (82 aa)). The 238-residue stretch at 509–746 (FIVSTRVRVG…AKMIEIEKGL (238 aa)) folds into the Phosphagen kinase C-terminal 2 domain. Residues 512–516 (STRVR), His-575, and Arg-619 contribute to the ATP site. Cys-661 is an active-site residue. Residues 670–674 (RASVL) and 699–704 (RGLYGE) each bind ATP.

This sequence belongs to the ATP:guanido phosphotransferase family. The cofactor is Mg(2+).

The enzyme catalyses taurocyamine + ATP = N-phosphotaurocyamine + ADP + H(+). This family of enzymes reversibly catalyzes the transfer of phosphate between ATP and various phosphogens (e.g. creatine phosphate). The chain is Taurocyamine kinase from Schistosoma mansoni (Blood fluke).